Here is a 766-residue protein sequence, read N- to C-terminus: Serine/threonine-protein kinase PLK4 (766 aa).

The Protein kinase domain occupies 14–267 (YEVQHLLGKG…LEAVLCHPFM (254 aa)). ATP is bound by residues 20 to 28 (LGKGGFAIV) and Lys-43. Residue Asp-138 is the Proton acceptor of the active site. The Cryptic POLO box 1 (CPB1) domain occupies 379-496 (EDRISVPPLN…ARFVGLVKSK (118 aa)). Residues 497 to 600 (TPKVTYFSTL…GRRPVTDVQP (104 aa)) enclose the Cryptic POLO box 2 (CPB2) domain. The POLO box domain occupies 658-737 (PIKRINVPDV…IPNIQIKLKT (80 aa)).

The protein belongs to the protein kinase superfamily. Ser/Thr protein kinase family. CDC5/Polo subfamily. Homodimer. In terms of processing, ubiquitinated by the SCF(Slimb) ubiquitin ligase complex; leading to its degradation by the proteasome during interphase and regulating centriole number and ensuring the block to centriole reduplication.

The protein localises to the cytoplasm. Its subcellular location is the cytoskeleton. It is found in the microtubule organizing center. It localises to the centrosome. The protein resides in the centriole. It catalyses the reaction L-seryl-[protein] + ATP = O-phospho-L-seryl-[protein] + ADP + H(+). The catalysed reaction is L-threonyl-[protein] + ATP = O-phospho-L-threonyl-[protein] + ADP + H(+). Its function is as follows. Serine/threonine-protein kinase that plays a central role in centriole duplication. Able to trigger procentriole formation on the surface of the mother centriole cylinder, using mother centriole as a platform, leading to the recruitment of centriole biogenesis proteins such as sas-6. When overexpressed, it is able to induce centrosome amplification through the simultaneous generation of multiple procentrioles adjoining each parental centriole during S phase. Centrosome amplification following overexpression can initiate tumorigenesis, highlighting the importance of centrosome regulation in cancers. In Drosophila yakuba (Fruit fly), this protein is Serine/threonine-protein kinase PLK4 (SAK).